The primary structure comprises 322 residues: Arginase-1 (322 aa).

Lysine 17 is subject to N6-succinyllysine. Phosphoserine occurs at positions 62 and 72. At lysine 75 the chain carries N6-succinyllysine. Residues histidine 101, aspartate 124, histidine 126, and aspartate 128 each contribute to the Mn(2+) site. Substrate-binding positions include histidine 126–asparagine 130 and serine 137–asparagine 139. Serine 163 carries the post-translational modification Phosphoserine. Aspartate 183 provides a ligand contact to substrate. Serine 217 carries the post-translational modification Phosphoserine. Mn(2+) is bound by residues aspartate 232 and aspartate 234. Positions 246 and 277 each coordinate substrate.

The protein belongs to the arginase family. In terms of assembly, homotrimer. Interacts with CMTM6. It depends on Mn(2+) as a cofactor. As to expression, within the immune system initially reported to be selectively expressed in granulocytes (polymorphonuclear leukocytes [PMNs]). Also detected in macrophages mycobacterial granulomas. Expressed in group2 innate lymphoid cells (ILC2s) during lung disease.

Its subcellular location is the cytoplasm. The protein resides in the cytoplasmic granule. It carries out the reaction L-arginine + H2O = urea + L-ornithine. Its pathway is nitrogen metabolism; urea cycle; L-ornithine and urea from L-arginine: step 1/1. Its function is as follows. Key element of the urea cycle converting L-arginine to urea and L-ornithine, which is further metabolized into metabolites proline and polyamides that drive collagen synthesis and bioenergetic pathways critical for cell proliferation, respectively; the urea cycle takes place primarily in the liver and, to a lesser extent, in the kidneys. In terms of biological role, functions in L-arginine homeostasis in nonhepatic tissues characterized by the competition between nitric oxide synthase (NOS) and arginase for the available intracellular substrate arginine. Arginine metabolism is a critical regulator of innate and adaptive immune responses. Involved in an antimicrobial effector pathway in polymorphonuclear granulocytes (PMN). Upon PMN cell death is liberated from the phagolysosome and depletes arginine in the microenvironment leading to suppressed T cell and natural killer (NK) cell proliferation and cytokine secretion. In group 2 innate lymphoid cells (ILC2s) promotes acute type 2 inflammation in the lung and is involved in optimal ILC2 proliferation but not survival. In humans, the immunological role in the monocytic/macrophage/dendritic cell (DC) lineage is unsure. The protein is Arginase-1 (ARG1) of Homo sapiens (Human).